The primary structure comprises 101 residues: Small ribosomal subunit protein bS18c (101 aa).

This sequence belongs to the bacterial ribosomal protein bS18 family. In terms of assembly, part of the 30S ribosomal subunit.

It is found in the plastid. The protein resides in the chloroplast. The protein is Small ribosomal subunit protein bS18c of Nymphaea alba (White water-lily).